The primary structure comprises 24 residues: Pandinin-2 (24 aa).

As to quaternary structure, homooligomer. As to expression, expressed by the venom gland.

Its subcellular location is the secreted. The protein localises to the target cell membrane. Functionally, disrupts cell membranes through formation of pores. Has strong antimicrobial activity against Gram-positive bacteria B.subtilis, S.epidermidis, E.faecalis and S.aureus. Is less active against Gram-negative bacteria P.aeruginosa and E.coli. Also increases efficacy of antibiotics (ampicillin, chloramphenicol, streptomycin, kanamycin, novobiocin) when tested against E.coli, probably by facilitating their incorporation into the bacteria. Possesses antifungal activity against C.albicans and hemolytic activity against human, sheep and pig erythrocytes. The sequence is that of Pandinin-2 from Pandinus imperator (Emperor scorpion).